Consider the following 64-residue polypeptide: Translation machinery-associated protein 7 homolog (64 aa).

Positions 1–64 (MSGREGGKKK…GGGIKKSGKK (64 aa)) are disordered. Positions 27-38 (MAFKQKQKEQQK) are enriched in basic and acidic residues. A coiled-coil region spans residues 27-50 (MAFKQKQKEQQKALEAAKANASKK). Positions 39–50 (ALEAAKANASKK) are enriched in low complexity. Over residues 53-64 (LVGGGIKKSGKK) the composition is skewed to gly residues.

This chain is Translation machinery-associated protein 7 homolog, found in Drosophila melanogaster (Fruit fly).